The following is a 341-amino-acid chain: MTEQQPVAVLGGGSFGTAVANLLAENGVPVRQWMRDPAQAEAMRVNRENPRYLKGIRLHDGVEPVNDLLATLQASELIFVALPSSALRSVLAPHAELLRGKALVSLTKGIEAQSFKLMSQILEEIAPEARIGVLSGPNLAREIAEHALTATVVASEHEDLCQQVQAVLHGRTFRVYASADRFGVELGGALKNVYAIIAGMAVALGMGENTKSMLITRALAEMTRFAVSQGANPMTFLGLAGVGDLIVTCSSPKSRNYQVGYALGQGQSLEEAVSRLGEVAEGVNTLKVLKTKAQQVQVYMPLVAGLHAILFEGRTLNQVIEHLMRAEPKTDVDFISISGFN.

Ser14, Phe15, Arg35, and Lys108 together coordinate NADPH. The sn-glycerol 3-phosphate site is built by Lys108 and Gly136. Ala140 lines the NADPH pocket. Sn-glycerol 3-phosphate contacts are provided by Lys191, Asp244, Ser254, Arg255, and Asn256. The active-site Proton acceptor is Lys191. NADPH is bound at residue Arg255. Residues Val279 and Glu281 each coordinate NADPH.

This sequence belongs to the NAD-dependent glycerol-3-phosphate dehydrogenase family.

It localises to the cytoplasm. The catalysed reaction is sn-glycerol 3-phosphate + NAD(+) = dihydroxyacetone phosphate + NADH + H(+). It catalyses the reaction sn-glycerol 3-phosphate + NADP(+) = dihydroxyacetone phosphate + NADPH + H(+). It participates in membrane lipid metabolism; glycerophospholipid metabolism. In terms of biological role, catalyzes the reduction of the glycolytic intermediate dihydroxyacetone phosphate (DHAP) to sn-glycerol 3-phosphate (G3P), the key precursor for phospholipid synthesis. In Pseudomonas putida (strain ATCC 700007 / DSM 6899 / JCM 31910 / BCRC 17059 / LMG 24140 / F1), this protein is Glycerol-3-phosphate dehydrogenase [NAD(P)+].